The primary structure comprises 1055 residues: Cellulose synthase A catalytic subunit 9 [UDP-forming] (1055 aa).

Over Met1–Met268 the chain is Cytoplasmic. The Zn(2+) site is built by Cys37, Cys40, Cys56, Cys59, Cys64, Cys67, Cys79, and Cys82. An RING-type; degenerate zinc finger spans residues Cys37–Lys83. The helical transmembrane segment at Val269 to Val289 threads the bilayer. Over Pro290–Asp291 the chain is Extracellular. Residues Ala292–Leu312 form a helical membrane-spanning segment. The Cytoplasmic portion of the chain corresponds to Asp313–Thr831. UDP-alpha-D-glucose contacts are provided by Ser351, Lys357, Glu358, and Asp387. Asp387 is a catalytic residue. Residues Asn439 to Val468 adopt a coiled-coil conformation. Position 528 (Lys528) interacts with UDP-alpha-D-glucose. 2 residues coordinate Mn(2+): Lys529 and Asp553. The active site involves Asp753. The chain crosses the membrane as a helical span at residues Ile832 to Leu852. The Extracellular portion of the chain corresponds to Thr853–Pro860. A helical transmembrane segment spans residues Ile861–Ile881. Over Leu882–Gln899 the chain is Cytoplasmic. The chain crosses the membrane as a helical span at residues Phe900–Val920. Residues Leu921–Thr951 lie on the Extracellular side of the membrane. The N-linked (GlcNAc...) asparagine glycan is linked to Asn927. The chain crosses the membrane as a helical span at residues Thr952–Val972. Topologically, residues Ser973 to Trp983 are cytoplasmic. A helical membrane pass occupies residues Gly984–Leu1004. Topologically, residues Lys1005 to Arg1013 are extracellular. Residues Thr1014 to Val1034 traverse the membrane as a helical segment. The Cytoplasmic segment spans residues Arg1035–Cys1055.

This sequence belongs to the glycosyltransferase 2 family. Plant cellulose synthase subfamily. Mn(2+) serves as cofactor. It depends on Zn(2+) as a cofactor.

Its subcellular location is the cell membrane. The enzyme catalyses [(1-&gt;4)-beta-D-glucosyl](n) + UDP-alpha-D-glucose = [(1-&gt;4)-beta-D-glucosyl](n+1) + UDP + H(+). The protein operates within glycan metabolism; plant cellulose biosynthesis. In terms of biological role, catalytic subunit of cellulose synthase terminal complexes ('rosettes'), required for beta-1,4-glucan microfibril crystallization, a major mechanism of the cell wall formation. Involved in the secondary cell wall formation. This chain is Cellulose synthase A catalytic subunit 9 [UDP-forming] (CESA9), found in Oryza sativa subsp. indica (Rice).